The sequence spans 307 residues: Woronin sorting complex protein (307 aa).

Helical transmembrane passes span 106–125 (MATY…IWIL), 146–167 (NLIV…IAGA), and 207–227 (AWMP…NYIT). A compositionally biased stretch (basic and acidic residues) spans 241–264 (GDGAHGDHRHDRERERDRERERHS). Residues 241-307 (GDGAHGDHRH…YPSLGQNPRY (67 aa)) form a disordered region. Residues 266 to 278 (PPHGHGPSHGGRP) are compositionally biased toward low complexity.

This sequence belongs to the peroxisomal membrane protein PXMP2/4 family. As to quaternary structure, self-assembles into detergent-resistant oligomers and forms a complex with hex-1 assemblies.

It is found in the peroxisome membrane. The protein localises to the cell septum. Its function is as follows. Woronin sorting complex protein involved in both Woronin bodies (WB) formation and inherence. Localizes to large peroxisome membranes where it self-assembles into detergent-resistant oligomers that envelop hex-1 assemblies, producing asymmetrical nascent WBs. These structures are then delivered to the cell cortex, which permits partitioning of the nascent WB and WB inheritance. This is Woronin sorting complex protein from Neurospora crassa (strain ATCC 24698 / 74-OR23-1A / CBS 708.71 / DSM 1257 / FGSC 987).